The sequence spans 806 residues: Phenylalanine--tRNA ligase beta subunit (806 aa).

One can recognise a tRNA-binding domain in the interval 40–155 (NKGVKGVVVG…SDAEVGADAL (116 aa)). A B5 domain is found at 409–484 (VQERTVSVTA…RLYGYDHIPV (76 aa)). Mg(2+)-binding residues include Asp-462, Asp-468, Glu-471, and Glu-472. Residues 712 to 805 (PRFPSMTRDM…VEEKFGAELR (94 aa)) enclose the FDX-ACB domain.

This sequence belongs to the phenylalanyl-tRNA synthetase beta subunit family. Type 1 subfamily. In terms of assembly, tetramer of two alpha and two beta subunits. The cofactor is Mg(2+).

The protein resides in the cytoplasm. It catalyses the reaction tRNA(Phe) + L-phenylalanine + ATP = L-phenylalanyl-tRNA(Phe) + AMP + diphosphate + H(+). The polypeptide is Phenylalanine--tRNA ligase beta subunit (Bacillus cereus (strain ATCC 14579 / DSM 31 / CCUG 7414 / JCM 2152 / NBRC 15305 / NCIMB 9373 / NCTC 2599 / NRRL B-3711)).